An 86-amino-acid polypeptide reads, in one-letter code: Large ribosomal subunit protein bL27 (86 aa).

Belongs to the bacterial ribosomal protein bL27 family.

In Xanthomonas oryzae pv. oryzae (strain PXO99A), this protein is Large ribosomal subunit protein bL27.